Here is a 161-residue protein sequence, read N- to C-terminus: Ribonuclease H (161 aa).

An RNase H type-1 domain is found at 5 to 149 (EKLAIAAATD…VDAIAVAFSK (145 aa)). Asp14, Glu53, Asp78, and Asp141 together coordinate Mg(2+).

Belongs to the RNase H family. As to quaternary structure, monomer. Requires Mg(2+) as cofactor.

The protein resides in the cytoplasm. The enzyme catalyses Endonucleolytic cleavage to 5'-phosphomonoester.. In terms of biological role, endonuclease that specifically degrades the RNA of RNA-DNA hybrids. This is Ribonuclease H from Prochlorococcus marinus (strain NATL1A).